A 1066-amino-acid polypeptide reads, in one-letter code: Carbamoyl phosphate synthase large chain (1066 aa).

The interval 1-401 (MPKNNNIKKV…ALMKAVRSLE (401 aa)) is carboxyphosphate synthetic domain. Residues arginine 129, arginine 169, glycine 175, glycine 176, arginine 208, isoleucine 210, glutamate 215, glycine 241, valine 242, histidine 243, glutamine 284, and glutamate 298 each coordinate ATP. The 195-residue stretch at 133 to 327 (KNTMEKIGEP…IAKVAAKIAL (195 aa)) folds into the ATP-grasp 1 domain. Mg(2+) is bound by residues glutamine 284, glutamate 298, and asparagine 300. 3 residues coordinate Mn(2+): glutamine 284, glutamate 298, and asparagine 300. Residues 402–547 (QNIYSMNYGD…YSCFDSENEV (146 aa)) are oligomerization domain. Residues 548–931 (DATKTKKKVL…ALYKAFLGAG (384 aa)) form a carbamoyl phosphate synthetic domain region. The 191-residue stretch at 673–863 (DEILEKCCIP…IVSLASKAVL (191 aa)) folds into the ATP-grasp 2 domain. ATP-binding residues include arginine 709, lysine 748, leucine 750, glutamate 754, glycine 779, isoleucine 780, histidine 781, serine 782, glutamine 822, and glutamate 834. Residues glutamine 822, glutamate 834, and asparagine 836 each coordinate Mg(2+). 3 residues coordinate Mn(2+): glutamine 822, glutamate 834, and asparagine 836. Positions 932 to 1066 (INLPKHKKMI…ELSLIDIARI (135 aa)) constitute an MGS-like domain. An allosteric domain region spans residues 932 to 1066 (INLPKHKKMI…ELSLIDIARI (135 aa)).

It belongs to the CarB family. Composed of two chains; the small (or glutamine) chain promotes the hydrolysis of glutamine to ammonia, which is used by the large (or ammonia) chain to synthesize carbamoyl phosphate. Tetramer of heterodimers (alpha,beta)4. Mg(2+) serves as cofactor. Requires Mn(2+) as cofactor.

It carries out the reaction hydrogencarbonate + L-glutamine + 2 ATP + H2O = carbamoyl phosphate + L-glutamate + 2 ADP + phosphate + 2 H(+). The catalysed reaction is hydrogencarbonate + NH4(+) + 2 ATP = carbamoyl phosphate + 2 ADP + phosphate + 2 H(+). It functions in the pathway amino-acid biosynthesis; L-arginine biosynthesis; carbamoyl phosphate from bicarbonate: step 1/1. It participates in pyrimidine metabolism; UMP biosynthesis via de novo pathway; (S)-dihydroorotate from bicarbonate: step 1/3. Its function is as follows. Large subunit of the glutamine-dependent carbamoyl phosphate synthetase (CPSase). CPSase catalyzes the formation of carbamoyl phosphate from the ammonia moiety of glutamine, carbonate, and phosphate donated by ATP, constituting the first step of 2 biosynthetic pathways, one leading to arginine and/or urea and the other to pyrimidine nucleotides. The large subunit (synthetase) binds the substrates ammonia (free or transferred from glutamine from the small subunit), hydrogencarbonate and ATP and carries out an ATP-coupled ligase reaction, activating hydrogencarbonate by forming carboxy phosphate which reacts with ammonia to form carbamoyl phosphate. This Lachnoclostridium phytofermentans (strain ATCC 700394 / DSM 18823 / ISDg) (Clostridium phytofermentans) protein is Carbamoyl phosphate synthase large chain.